The sequence spans 666 residues: MTPTPDAPAAAAADAATGAGWLARRRGALARVALAPVAQAIGRVERVADGIAFVSGLEDTMLNEVLRFEGGVTGFAHTLDEDLISVVLLDPDAGVRAQTAVARTGAVLEVPAGPQLLGRVVDPLGRPLDGGAPLDAAHTLPIERAAPAIIERDLVSEPLDTGVLIVDALFTIGRGQRELIIGDRATGKTSLAIDAIVNQRHSDVICVYVAIGQRASAVRRVIDAVRRYGAPERCVFVVAPAACAPGLQWIAPFAGFSIAEYFRDRGQHALVVVDDLTKHAATHRELALLTREPPGREAYPGDIFYVHARLLERAAKLSAALGGGSLSALPIAETDAGNLAAYIPTNLISITDGQIVLDSALFAANQRPAVDVGLSVSRVGGKAQHPALRAASGRLRLDYAQFLELEAFTRFGGLTDARLRAQITRGERIRALITQPRFRALRTLDEVVLLKALAAGALDAMSPDLVAPLRERLPAWLDARIAALTPALAPPRDWLADDAALDALAESVGELIERIAADAARRATAGMPAEDAAGDIGGAFGGEQARGDADRDADHGANREVSREVSPEASREVSREVSCEVSHEADRDAAADAARVAGRAPGRAEPDRAAPRAMPDGPPRAQADGDRASASRPRPDARGDAARTAPSPQGGADANVDAEAEARHKR.

Residue 182–189 (GDRATGKT) participates in ATP binding. The disordered stretch occupies residues 527–666 (MPAEDAAGDI…DAEAEARHKR (140 aa)). Over residues 545-590 (ARGDADRDADHGANREVSREVSPEASREVSREVSCEVSHEADRDAA) the composition is skewed to basic and acidic residues. The span at 591–601 (ADAARVAGRAP) shows a compositional bias: low complexity. Basic and acidic residues predominate over residues 623–641 (ADGDRASASRPRPDARGDA).

This sequence belongs to the ATPase alpha/beta chains family. F-type ATPases have 2 components, CF(1) - the catalytic core - and CF(0) - the membrane proton channel. CF(1) has five subunits: alpha(3), beta(3), gamma(1), delta(1), epsilon(1). CF(0) has three main subunits: a(1), b(2) and c(9-12). The alpha and beta chains form an alternating ring which encloses part of the gamma chain. CF(1) is attached to CF(0) by a central stalk formed by the gamma and epsilon chains, while a peripheral stalk is formed by the delta and b chains.

It localises to the cell inner membrane. It catalyses the reaction ATP + H2O + 4 H(+)(in) = ADP + phosphate + 5 H(+)(out). In terms of biological role, produces ATP from ADP in the presence of a proton gradient across the membrane. The alpha chain is a regulatory subunit. This Burkholderia pseudomallei (strain K96243) protein is ATP synthase subunit alpha 2.